Here is a 469-residue protein sequence, read N- to C-terminus: Asparagine--tRNA ligase (469 aa).

The protein belongs to the class-II aminoacyl-tRNA synthetase family. As to quaternary structure, homodimer.

Its subcellular location is the cytoplasm. It carries out the reaction tRNA(Asn) + L-asparagine + ATP = L-asparaginyl-tRNA(Asn) + AMP + diphosphate + H(+). The protein is Asparagine--tRNA ligase of Porphyromonas gingivalis (strain ATCC BAA-308 / W83).